Here is a 197-residue protein sequence, read N- to C-terminus: Rac-like GTP-binding protein 5 (197 aa).

Residue 13–20 (GDGAVGKT) participates in GTP binding. Residues 35–43 (YVPTVFDNF) carry the Effector region motif. GTP-binding positions include 60–64 (DTAGQ) and 118–121 (TKLD). C194 bears the Cysteine methyl ester mark. C194 carries S-geranylgeranyl cysteine lipidation. The propeptide at 195-197 (AIL) is removed in mature form.

Belongs to the small GTPase superfamily. Rho family.

It is found in the cytoplasm. It localises to the membrane. Inactive GDP-bound Rho GTPases reside in the cytosol, are found in a complex with Rho GDP-dissociation inhibitors (Rho GDIs), and are released from the GDI protein in order to translocate to membranes upon activation. The sequence is that of Rac-like GTP-binding protein 5 (RAC5) from Oryza sativa subsp. japonica (Rice).